Reading from the N-terminus, the 156-residue chain is CD-NTase/cGAS isopeptidase (156 aa).

The region spanning 16–156 (LVVIMGHVVT…LITVFKKIES (141 aa)) is the MPN domain. The Proton donor/acceptor role is filled by Glu-39. Residues His-101, His-103, and Asp-114 each contribute to the Zn(2+) site. Positions 101-114 (HTHPEDRPFPSATD) match the JAMM motif motif.

The protein belongs to the peptidase M67B family. Cap3 isopeptidase subfamily. It depends on Zn(2+) as a cofactor.

With respect to regulation, cleavage of conjugated proteins is inhibited by EDTA. Metalloprotease priming reversal component of a CBASS system. CBASS (cyclic oligonucleotide-based antiphage signaling system) provides immunity against bacteriophages. The CD-NTase protein (DncV) synthesizes cyclic nucleotides in response to infection; these serve as specific second messenger signals. The signals activate a diverse range of effectors, leading to bacterial cell death and thus abortive phage infection. A type II-A(GA) CBASS system. Functionally, reverses the primed state of DncV, the CD-NTase. Cleaves a DncV-GFP (green fluorescent protein) fusion protein precisely at the C-terminus of DncV. Overexpression decreases the efficacy of CBASS protection against phages T2, T4, T5 and T6, blocks formation of DncV-conjugates in vivo, and inhibits in vivo activation of DncV. Antagonism of phage defense upon overexpression is CBASS-system specific, Cap3 from this bacteria only antagonizes its cognate CBASS system and not that of C.freundii, E.coli or E.hormaechei. In terms of biological role, protects E.coli against phage infection. When the CBASS operon (capV-dncV-cap2-cap3) is introduced in E.coli MG1655 there is about 100-fold protection against phages P1 and T2. When the operon is introduced in E.coli MG1655 there is a more than 10(3) decrease in the efficiency of T2 plaque formation. Protects 100-fold against phage T5, offers no protection against T7. When the operon is introduced in E.coli MG1655 it protects against phages T2, T4, T5 and T6. Another paper shows the operon confers protection against phages P1, T2, T5 and T6 but not T4 or lambda. In Vibrio cholerae serotype O1 (strain ATCC 39315 / El Tor Inaba N16961), this protein is CD-NTase/cGAS isopeptidase.